A 372-amino-acid chain; its full sequence is Peptidyl-prolyl cis-trans isomerase D (372 aa).

One can recognise a PPIase cyclophilin-type domain in the interval 10 to 173 (FFDIQIGQQQ…TDVTIAECGE (164 aa)). The tract at residues 174-193 (LTGEDYDNADKQTPDATGDP) is disordered. TPR repeat units lie at residues 215-248 (ASEL…LNEF), 268-304 (FTLH…ASAK), and 309-342 (AKVY…APSD).

The protein belongs to the cyclophilin-type PPIase family. PPIase D subfamily.

The protein resides in the cytoplasm. The enzyme catalyses [protein]-peptidylproline (omega=180) = [protein]-peptidylproline (omega=0). In terms of biological role, PPIases accelerate the folding of proteins. It catalyzes the cis-trans isomerization of proline imidic peptide bonds in oligopeptides. The polypeptide is Peptidyl-prolyl cis-trans isomerase D (cpr6) (Emericella nidulans (strain FGSC A4 / ATCC 38163 / CBS 112.46 / NRRL 194 / M139) (Aspergillus nidulans)).